The following is a 611-amino-acid chain: Putative clathrin assembly protein At4g02650 (611 aa).

The ENTH domain maps to 26–162 (GRSSSLTELE…DYRMQGRRGK (137 aa)). 2 disordered regions span residues 158–184 (GRRGKKKSGGGGGGDGDSGEEDDHRGT) and 337–406 (TTKS…GDLL). Residues 386–401 (METKKDVEEVVSRQDQ) are compositionally biased toward basic and acidic residues.

It is found in the membrane. The protein localises to the clathrin-coated pit. Its subcellular location is the golgi apparatus. The protein resides in the cytoplasmic vesicle. It localises to the clathrin-coated vesicle. This Arabidopsis thaliana (Mouse-ear cress) protein is Putative clathrin assembly protein At4g02650.